We begin with the raw amino-acid sequence, 172 residues long: Probable metallophosphoesterase MTH_1774 (172 aa).

Positions 8, 10, 37, 59, 85, 113, and 115 each coordinate a divalent metal cation.

Belongs to the metallophosphoesterase superfamily. YfcE family. A divalent metal cation serves as cofactor.

The protein is Probable metallophosphoesterase MTH_1774 of Methanothermobacter thermautotrophicus (strain ATCC 29096 / DSM 1053 / JCM 10044 / NBRC 100330 / Delta H) (Methanobacterium thermoautotrophicum).